The following is a 39-amino-acid chain: Photosystem II reaction center protein J (39 aa).

The helical transmembrane segment at 7–27 (IPLWLVGLVGGLAVITMLSLF) threads the bilayer.

It belongs to the PsbJ family. As to quaternary structure, PSII is composed of 1 copy each of membrane proteins PsbA, PsbB, PsbC, PsbD, PsbE, PsbF, PsbH, PsbI, PsbJ, PsbK, PsbL, PsbM, PsbT, PsbX, PsbY, PsbZ, Psb30/Ycf12, at least 3 peripheral proteins of the oxygen-evolving complex and a large number of cofactors. It forms dimeric complexes.

The protein resides in the plastid. It localises to the chloroplast thylakoid membrane. Its function is as follows. One of the components of the core complex of photosystem II (PSII). PSII is a light-driven water:plastoquinone oxidoreductase that uses light energy to abstract electrons from H(2)O, generating O(2) and a proton gradient subsequently used for ATP formation. It consists of a core antenna complex that captures photons, and an electron transfer chain that converts photonic excitation into a charge separation. The polypeptide is Photosystem II reaction center protein J (Trieres chinensis (Marine centric diatom)).